The following is a 556-amino-acid chain: DNA ligase (556 aa).

An ATP-binding site is contributed by Glu245. The active-site N6-AMP-lysine intermediate is the Lys247. ATP is bound by residues Arg252, Arg267, Glu296, Phe336, Arg408, and Lys414.

This sequence belongs to the ATP-dependent DNA ligase family. Mg(2+) serves as cofactor.

It carries out the reaction ATP + (deoxyribonucleotide)n-3'-hydroxyl + 5'-phospho-(deoxyribonucleotide)m = (deoxyribonucleotide)n+m + AMP + diphosphate.. Its function is as follows. DNA ligase that seals nicks in double-stranded DNA during DNA replication, DNA recombination and DNA repair. The protein is DNA ligase of Methanosphaerula palustris (strain ATCC BAA-1556 / DSM 19958 / E1-9c).